The following is a 221-amino-acid chain: UPF0758 protein YicR (221 aa).

One can recognise an MPN domain in the interval 99–221 (ALLSPEMTRE…YVSFAERGWI (123 aa)). The Zn(2+) site is built by His-170, His-172, and Asp-183. Positions 170–183 (HNHPSGCAEPSKAD) match the JAMM motif motif.

It belongs to the UPF0758 family. YicR subfamily.

The polypeptide is UPF0758 protein YicR (Salmonella agona (strain SL483)).